Here is a 275-residue protein sequence, read N- to C-terminus: Dermonecrotic toxin LhSicTox-alphaIV2 (275 aa).

Histidine 5 is a catalytic residue. The Mg(2+) site is built by glutamate 25 and aspartate 27. Histidine 41 functions as the Nucleophile in the catalytic mechanism. Cystine bridges form between cysteine 45–cysteine 51 and cysteine 47–cysteine 192. Position 85 (aspartate 85) interacts with Mg(2+).

Belongs to the arthropod phospholipase D family. Class II subfamily. Requires Mg(2+) as cofactor. In terms of tissue distribution, expressed by the venom gland.

Its subcellular location is the secreted. It catalyses the reaction an N-(acyl)-sphingosylphosphocholine = an N-(acyl)-sphingosyl-1,3-cyclic phosphate + choline. The catalysed reaction is an N-(acyl)-sphingosylphosphoethanolamine = an N-(acyl)-sphingosyl-1,3-cyclic phosphate + ethanolamine. It carries out the reaction a 1-acyl-sn-glycero-3-phosphocholine = a 1-acyl-sn-glycero-2,3-cyclic phosphate + choline. The enzyme catalyses a 1-acyl-sn-glycero-3-phosphoethanolamine = a 1-acyl-sn-glycero-2,3-cyclic phosphate + ethanolamine. Functionally, dermonecrotic toxins cleave the phosphodiester linkage between the phosphate and headgroup of certain phospholipids (sphingolipid and lysolipid substrates), forming an alcohol (often choline) and a cyclic phosphate. This toxin acts on sphingomyelin (SM). It may also act on ceramide phosphoethanolamine (CPE), lysophosphatidylcholine (LPC) and lysophosphatidylethanolamine (LPE), but not on lysophosphatidylserine (LPS), and lysophosphatidylglycerol (LPG). It acts by transphosphatidylation, releasing exclusively cyclic phosphate products as second products. Induces dermonecrosis, hemolysis, increased vascular permeability, edema, inflammatory response, and platelet aggregation. This Loxosceles hirsuta (Recluse spider) protein is Dermonecrotic toxin LhSicTox-alphaIV2.